The following is a 370-amino-acid chain: tRNA-specific 2-thiouridylase MnmA (370 aa).

Residues 25-32 (ALSGGVDS) and leucine 51 each bind ATP. Residue cysteine 112 is the Nucleophile of the active site. A disulfide bond links cysteine 112 and cysteine 211. Glycine 137 contributes to the ATP binding site. The tract at residues 161–163 (KDQ) is interaction with tRNA. Catalysis depends on cysteine 211, which acts as the Cysteine persulfide intermediate. The interaction with tRNA stretch occupies residues 316 to 317 (RY).

Belongs to the MnmA/TRMU family.

Its subcellular location is the cytoplasm. It carries out the reaction S-sulfanyl-L-cysteinyl-[protein] + uridine(34) in tRNA + AH2 + ATP = 2-thiouridine(34) in tRNA + L-cysteinyl-[protein] + A + AMP + diphosphate + H(+). Functionally, catalyzes the 2-thiolation of uridine at the wobble position (U34) of tRNA, leading to the formation of s(2)U34. In Synechococcus sp. (strain JA-3-3Ab) (Cyanobacteria bacterium Yellowstone A-Prime), this protein is tRNA-specific 2-thiouridylase MnmA.